The primary structure comprises 643 residues: E3 ubiquitin-protein ligase Praja-1 (643 aa).

The disordered stretch occupies residues 1–363 (MGQESSKPVW…SDDYYKYCDE (363 aa)). Basic and acidic residues-rich tracts occupy residues 95–105 (DYSRYPPREYR), 145–158 (KFKD…EKGA), and 173–183 (RDVREERDKLD). Positions 200–209 (QSSVASQSSS) are enriched in low complexity. Over residues 213–227 (LATKGDSSERERREQ) the composition is skewed to basic and acidic residues. Residue Ser265 is modified to Phosphoserine. Phosphothreonine is present on Thr277. 2 stretches are compositionally biased toward basic and acidic residues: residues 289-310 (RWRD…RGRG) and 320-362 (KYPE…KYCD). Residues Ser365 and Ser367 each carry the phosphoserine modification. Residues 380 to 454 (RSREQTLSSS…REPSLQEEQA (75 aa)) form a disordered region. Residues 410–439 (SASTGTSPGPGASASAGAGAGASAGSNGSN) show a composition bias toward low complexity. An RING-type zinc finger spans residues 595–636 (CPICCSEYVKGEVATELPCHHYFHKPCVSIWLQKSGTCPVCR).

In terms of assembly, binds ubiquitin-conjugating enzymes (E2s). In vitro, interacts with the ubiquitin-conjugating enzyme, UBE2D2. Post-translationally, substrate for E2-dependent ubiquitination. In terms of tissue distribution, expressed in various regions of the brain including the cerebellum, cerebral cortex, medulla, occipital pole, frontal lobe, temporal lobe and putamen. Highest levels in the cerebral cortex.

It carries out the reaction S-ubiquitinyl-[E2 ubiquitin-conjugating enzyme]-L-cysteine + [acceptor protein]-L-lysine = [E2 ubiquitin-conjugating enzyme]-L-cysteine + N(6)-ubiquitinyl-[acceptor protein]-L-lysine.. Its function is as follows. Has E2-dependent E3 ubiquitin-protein ligase activity. Ubiquitinates MAGED1 antigen leading to its subsequent degradation by proteasome. May be involved in protein sorting. The protein is E3 ubiquitin-protein ligase Praja-1 (PJA1) of Homo sapiens (Human).